Reading from the N-terminus, the 246-residue chain is 5'-nucleotidase SurE (246 aa).

A divalent metal cation contacts are provided by Asp8, Asp9, Ser39, and Asn91.

The protein belongs to the SurE nucleotidase family. The cofactor is a divalent metal cation.

The protein localises to the cytoplasm. It carries out the reaction a ribonucleoside 5'-phosphate + H2O = a ribonucleoside + phosphate. Its function is as follows. Nucleotidase that shows phosphatase activity on nucleoside 5'-monophosphates. This Actinobacillus succinogenes (strain ATCC 55618 / DSM 22257 / CCUG 43843 / 130Z) protein is 5'-nucleotidase SurE.